The sequence spans 392 residues: 1-deoxy-D-xylulose 5-phosphate reductoisomerase (392 aa).

5 residues coordinate NADPH: Thr-10, Gly-11, Ser-12, Ile-13, and Asn-124. A 1-deoxy-D-xylulose 5-phosphate-binding site is contributed by Lys-125. NADPH is bound at residue Glu-126. Residue Asp-150 participates in Mn(2+) binding. Positions 151, 152, 180, and 203 each coordinate 1-deoxy-D-xylulose 5-phosphate. Glu-152 serves as a coordination point for Mn(2+). NADPH is bound at residue Gly-209. 4 residues coordinate 1-deoxy-D-xylulose 5-phosphate: Ser-216, Asn-221, Lys-222, and Glu-225. Position 225 (Glu-225) interacts with Mn(2+).

Belongs to the DXR family. Requires Mg(2+) as cofactor. It depends on Mn(2+) as a cofactor.

The catalysed reaction is 2-C-methyl-D-erythritol 4-phosphate + NADP(+) = 1-deoxy-D-xylulose 5-phosphate + NADPH + H(+). It functions in the pathway isoprenoid biosynthesis; isopentenyl diphosphate biosynthesis via DXP pathway; isopentenyl diphosphate from 1-deoxy-D-xylulose 5-phosphate: step 1/6. Functionally, catalyzes the NADPH-dependent rearrangement and reduction of 1-deoxy-D-xylulose-5-phosphate (DXP) to 2-C-methyl-D-erythritol 4-phosphate (MEP). In Saccharophagus degradans (strain 2-40 / ATCC 43961 / DSM 17024), this protein is 1-deoxy-D-xylulose 5-phosphate reductoisomerase.